The following is a 331-amino-acid chain: tRNA-cytidine(32) 2-sulfurtransferase (331 aa).

Positions 71–76 (SGGKDS) match the PP-loop motif motif. [4Fe-4S] cluster contacts are provided by cysteine 146, cysteine 149, and cysteine 237.

This sequence belongs to the TtcA family. Homodimer. Requires Mg(2+) as cofactor. It depends on [4Fe-4S] cluster as a cofactor.

Its subcellular location is the cytoplasm. The catalysed reaction is cytidine(32) in tRNA + S-sulfanyl-L-cysteinyl-[cysteine desulfurase] + AH2 + ATP = 2-thiocytidine(32) in tRNA + L-cysteinyl-[cysteine desulfurase] + A + AMP + diphosphate + H(+). It functions in the pathway tRNA modification. Its function is as follows. Catalyzes the ATP-dependent 2-thiolation of cytidine in position 32 of tRNA, to form 2-thiocytidine (s(2)C32). The sulfur atoms are provided by the cysteine/cysteine desulfurase (IscS) system. The chain is tRNA-cytidine(32) 2-sulfurtransferase from Burkholderia multivorans (strain ATCC 17616 / 249).